The chain runs to 1505 residues: Probable serine/threonine-protein kinase irlD (1505 aa).

A compositionally biased stretch (basic residues) spans 1 to 18 (MGPKKGKRSHSKNHHHHN). Disordered stretches follow at residues 1–30 (MGPK…NSGG), 121–211 (IPQP…NNIL), 548–571 (TTTT…DKEN), and 862–1013 (EENE…TIAT). The segment covering 139-158 (SISTTTTTTTATAIEIESSS) has biased composition (low complexity). Residues 159–172 (GLTSNITDSTEIQL) show a composition bias toward polar residues. Composition is skewed to low complexity over residues 173–209 (DSTT…NSNN) and 548–561 (TTTT…TTTT). 2 stretches are compositionally biased toward basic and acidic residues: residues 562 to 571 (IDKDEKDKEN) and 862 to 882 (EENE…EKKK). Positions 846 to 892 (IRTEESLKAEKDLLEQEENEKKRLKEKRKKEEKEKKKQQNLKQKSLI) form a coiled coil. Residues 896-924 (TTTTTTTTPIPITVPIPTQTQTPTQTPTQ) show a composition bias toward low complexity. The segment covering 925–943 (TPIPTPIPTTPIPTTPIPI) has biased composition (pro residues). Composition is skewed to low complexity over residues 944-954 (PIQLTPTTPKT) and 960-977 (TPKT…KTPK). Over residues 978-989 (NSTLDKQTISTP) the composition is skewed to polar residues. The 271-residue stretch at 1054–1324 (RKDEFIIGRG…TENILLHPFF (271 aa)) folds into the Protein kinase domain. Residues 1060–1068 (IGRGSNGTL) and lysine 1083 each bind ATP. Aspartate 1194 functions as the Proton acceptor in the catalytic mechanism. The region spanning 1327-1505 (HEKKVKFIDA…LIYFNDLIIK (179 aa)) is the KEN domain.

It belongs to the protein kinase superfamily. Ser/Thr protein kinase family.

The enzyme catalyses L-seryl-[protein] + ATP = O-phospho-L-seryl-[protein] + ADP + H(+). It catalyses the reaction L-threonyl-[protein] + ATP = O-phospho-L-threonyl-[protein] + ADP + H(+). In Dictyostelium discoideum (Social amoeba), this protein is Probable serine/threonine-protein kinase irlD (irlD).